Reading from the N-terminus, the 608-residue chain is Malonate--CoA ligase (608 aa).

Belongs to the ATP-dependent AMP-binding enzyme family. Expressed in flowers.

The protein localises to the cytoplasm. It is found in the nucleus. It carries out the reaction malonate + ATP + CoA = malonyl-CoA + AMP + diphosphate. In terms of biological role, malonate--CoA ligase that catalyzes the formation of malonyl-CoA directly from malonate and CoA. May be required for the detoxification of malonate. The protein is Malonate--CoA ligase (AAE13) of Arabidopsis thaliana (Mouse-ear cress).